We begin with the raw amino-acid sequence, 95 residues long: Small ribosomal subunit protein uS19 (95 aa).

Positions Pro76–Lys95 are disordered. A compositionally biased stretch (basic residues) spans Phe80–Lys95.

It belongs to the universal ribosomal protein uS19 family.

Protein S19 forms a complex with S13 that binds strongly to the 16S ribosomal RNA. This chain is Small ribosomal subunit protein uS19, found in Herpetosiphon aurantiacus (strain ATCC 23779 / DSM 785 / 114-95).